We begin with the raw amino-acid sequence, 87 residues long: MSEEQLKAFIAKVQGDSSLQEQLKAEGADVVAIAKAAGFTIKQQDLNAAASELSDEELEAASGGGDTGIQAVLHTAGCYGGTKMCRA.

The propeptide occupies 1 to 64; that stretch reads MSEEQLKAFI…DEELEAASGG (64 aa). Thr-67 bears the 2,3-didehydrobutyrine mark. The beta-methyllanthionine (Thr-Cys) cross-link spans 75 to 85; it reads TAGCYGGTKMC. Residues 78-82 constitute a cross-link (beta-methyllanthionine (Cys-Thr)); it reads CYGGT.

Cross-links are proved in vitro, when coepressed in E.coli with the ProcM lanthionine synthetase. In terms of processing, the beta-methyllanthionine residues have a DL configuration (with 2S,3S,6R stereochemistry). Post-translationally, maturation of prochlorosin involves the enzymatic conversion of Thr, and Ser into dehydrated AA and the formation of thioether bonds with cysteines. This is followed by membrane translocation and cleavage of the modified precursor.

The protein resides in the secreted. In terms of biological role, lanthionine-containing peptide (lantipeptide) with unknown function. Does not show antibiotic activity against Lactococcus lactis 117 and Bacillus subtilis 6633 bacteria. Organisms that produce this peptide live in oligotrophic environments at very dilute concentrations, suggesting this peptide is not secreted to influence other bacteria. The protein is Lantipeptide prochlorosin 3.3 of Prochlorococcus marinus (strain MIT 9313).